Here is a 159-residue protein sequence, read N- to C-terminus: tRNA-specific adenosine deaminase (159 aa).

A CMP/dCMP-type deaminase domain is found at 6–133 (EEQTYFMQEA…ERLNHRVQVE (128 aa)). His57 provides a ligand contact to Zn(2+). Glu59 (proton donor) is an active-site residue. The Zn(2+) site is built by Cys87 and Cys90.

This sequence belongs to the cytidine and deoxycytidylate deaminase family. Homodimer. Requires Zn(2+) as cofactor.

It carries out the reaction adenosine(34) in tRNA + H2O + H(+) = inosine(34) in tRNA + NH4(+). Catalyzes the deamination of adenosine to inosine at the wobble position 34 of tRNA(Arg2). The chain is tRNA-specific adenosine deaminase from Streptococcus pyogenes serotype M18 (strain MGAS8232).